Consider the following 411-residue polypeptide: 3-phosphoshikimate 1-carboxyvinyltransferase (411 aa).

The 3-phosphoshikimate site is built by Lys20, Ser21, and Arg25. Lys20 contacts phosphoenolpyruvate. Phosphoenolpyruvate is bound by residues Gly86 and Arg114. 3-phosphoshikimate contacts are provided by Ser156, Ser157, Gln158, Ser181, Asp295, and Lys322. Gln158 is a binding site for phosphoenolpyruvate. Asp295 (proton acceptor) is an active-site residue. Residues Arg326, Arg367, and Lys393 each contribute to the phosphoenolpyruvate site.

This sequence belongs to the EPSP synthase family. Monomer.

The protein localises to the cytoplasm. The catalysed reaction is 3-phosphoshikimate + phosphoenolpyruvate = 5-O-(1-carboxyvinyl)-3-phosphoshikimate + phosphate. It functions in the pathway metabolic intermediate biosynthesis; chorismate biosynthesis. Catalyzes the transfer of the enolpyruvyl moiety of phosphoenolpyruvate (PEP) to the 5-hydroxyl of shikimate-3-phosphate (S3P) to produce enolpyruvyl shikimate-3-phosphate and inorganic phosphate. This chain is 3-phosphoshikimate 1-carboxyvinyltransferase, found in Picrophilus torridus (strain ATCC 700027 / DSM 9790 / JCM 10055 / NBRC 100828 / KAW 2/3).